An 829-amino-acid polypeptide reads, in one-letter code: Leucine--tRNA ligase (829 aa).

The short motif at 40–50 is the 'HIGH' region element; that stretch reads PYPSGNIHMGH. The 'KMSKS' region motif lies at 581–585; that stretch reads KMSKS. Lys584 is a binding site for ATP.

It belongs to the class-I aminoacyl-tRNA synthetase family.

It localises to the cytoplasm. It catalyses the reaction tRNA(Leu) + L-leucine + ATP = L-leucyl-tRNA(Leu) + AMP + diphosphate. The chain is Leucine--tRNA ligase from Oleidesulfovibrio alaskensis (strain ATCC BAA-1058 / DSM 17464 / G20) (Desulfovibrio alaskensis).